The sequence spans 158 residues: 6,7-dimethyl-8-ribityllumazine synthase (158 aa).

5-amino-6-(D-ribitylamino)uracil is bound by residues phenylalanine 18, 50-52 (SYD), and 74-76 (AVI). 79–80 (ET) contributes to the (2S)-2-hydroxy-3-oxobutyl phosphate binding site. The active-site Proton donor is histidine 82. Leucine 107 lines the 5-amino-6-(D-ribitylamino)uracil pocket. (2S)-2-hydroxy-3-oxobutyl phosphate is bound at residue arginine 122.

The protein belongs to the DMRL synthase family.

It carries out the reaction (2S)-2-hydroxy-3-oxobutyl phosphate + 5-amino-6-(D-ribitylamino)uracil = 6,7-dimethyl-8-(1-D-ribityl)lumazine + phosphate + 2 H2O + H(+). It functions in the pathway cofactor biosynthesis; riboflavin biosynthesis; riboflavin from 2-hydroxy-3-oxobutyl phosphate and 5-amino-6-(D-ribitylamino)uracil: step 1/2. Catalyzes the formation of 6,7-dimethyl-8-ribityllumazine by condensation of 5-amino-6-(D-ribitylamino)uracil with 3,4-dihydroxy-2-butanone 4-phosphate. This is the penultimate step in the biosynthesis of riboflavin. The protein is 6,7-dimethyl-8-ribityllumazine synthase of Sulfolobus acidocaldarius (strain ATCC 33909 / DSM 639 / JCM 8929 / NBRC 15157 / NCIMB 11770).